The following is a 669-amino-acid chain: DNA mismatch repair protein MutL (669 aa).

The tract at residues 356-382 (FEQRQNTENNQEKTFSSEESNSKPFME) is disordered. Over residues 361–378 (NTENNQEKTFSSEESNSK) the composition is skewed to polar residues.

This sequence belongs to the DNA mismatch repair MutL/HexB family.

In terms of biological role, this protein is involved in the repair of mismatches in DNA. It is required for dam-dependent methyl-directed DNA mismatch repair. May act as a 'molecular matchmaker', a protein that promotes the formation of a stable complex between two or more DNA-binding proteins in an ATP-dependent manner without itself being part of a final effector complex. This Staphylococcus aureus (strain USA300) protein is DNA mismatch repair protein MutL.